The chain runs to 157 residues: Deoxyuridine 5'-triphosphate nucleotidohydrolase (157 aa).

Substrate contacts are provided by residues 73–75 (RSG), Asn-86, and 90–92 (TID).

Belongs to the dUTPase family. Requires Mg(2+) as cofactor.

The catalysed reaction is dUTP + H2O = dUMP + diphosphate + H(+). Its pathway is pyrimidine metabolism; dUMP biosynthesis; dUMP from dCTP (dUTP route): step 2/2. Its function is as follows. This enzyme is involved in nucleotide metabolism: it produces dUMP, the immediate precursor of thymidine nucleotides and it decreases the intracellular concentration of dUTP so that uracil cannot be incorporated into DNA. The sequence is that of Deoxyuridine 5'-triphosphate nucleotidohydrolase from Azorhizobium caulinodans (strain ATCC 43989 / DSM 5975 / JCM 20966 / LMG 6465 / NBRC 14845 / NCIMB 13405 / ORS 571).